The following is a 569-amino-acid chain: Arylsulfatase I (569 aa).

An N-terminal signal peptide occupies residues 1–23 (MHTLTGFSLVSLLSFGYLSWDWA). Residues Asp-55, Asp-56, and Cys-93 each coordinate Ca(2+). The active-site Nucleophile is the Cys-93. Cys-93 carries the post-translational modification 3-oxoalanine (Cys). Lys-147 contacts substrate. His-149 is an active-site residue. His-239 lines the substrate pocket. N-linked (GlcNAc...) asparagine glycans are attached at residues Asn-276 and Asn-288. Ca(2+) is bound by residues Asp-297 and Asn-298. Lys-315 contacts substrate. N-linked (GlcNAc...) asparagine glycosylation is found at Asn-466 and Asn-496. The interval 510–539 (RAHPDFNGGAWGPWASDEEEEEEEGRARSF) is disordered.

Belongs to the sulfatase family. It depends on Ca(2+) as a cofactor. The oxidation of Cys-93 residue to 3-oxoalanine (also known as C(alpha)-formylglycine) by SUMF1/Sulfatase-modifying factor 1, seems critical for catalytic activity. Expressed in placenta, in embryonic stem cells, fetal eyes and lens.

It localises to the secreted. The protein localises to the endoplasmic reticulum. Functionally, displays arylsulfatase activity at neutral pH, when co-expressed with SUMF1; arylsulfatase activity is measured in the secretion medium of retinal cell line, but no activity is recorded when measured in cell extracts. Lacks arylsulfatase activity. This chain is Arylsulfatase I (ARSI), found in Homo sapiens (Human).